The following is a 399-amino-acid chain: Nicotinate phosphoribosyltransferase (399 aa).

Histidine 217 is modified (phosphohistidine; by autocatalysis).

The protein belongs to the NAPRTase family. Post-translationally, transiently phosphorylated on a His residue during the reaction cycle. Phosphorylation strongly increases the affinity for substrates and increases the rate of nicotinate D-ribonucleotide production. Dephosphorylation regenerates the low-affinity form of the enzyme, leading to product release.

It carries out the reaction nicotinate + 5-phospho-alpha-D-ribose 1-diphosphate + ATP + H2O = nicotinate beta-D-ribonucleotide + ADP + phosphate + diphosphate. The protein operates within cofactor biosynthesis; NAD(+) biosynthesis; nicotinate D-ribonucleotide from nicotinate: step 1/1. Its function is as follows. Catalyzes the synthesis of beta-nicotinate D-ribonucleotide from nicotinate and 5-phospho-D-ribose 1-phosphate at the expense of ATP. The chain is Nicotinate phosphoribosyltransferase from Burkholderia cenocepacia (strain HI2424).